Reading from the N-terminus, the 505-residue chain is Alpha-1-syntrophin (505 aa).

Disordered stretches follow at residues M1–G24 and L40–P75. 2 consecutive PH domains span residues R6–N269 and D293–H401. The span at R9–G18 shows a compositional bias: low complexity. Residues R87–K170 form the PDZ domain. Residues S101, S184, S189, S193, and S200 each carry the phosphoserine modification. The tract at residues T183–A212 is disordered. Over residues L195–L209 the composition is skewed to polar residues. The SU domain maps to P449–A505. The calmodulin-binding stretch occupies residues P483–A505.

The protein belongs to the syntrophin family. Monomer and homodimer. Interacts with the dystrophin related protein DTNA; SGCG of the dystrophin glycoprotein complex; NOS1; GRB2; GA; TGFA; MAPK12 and the sodium channel proteins SCN4A and SCN5A. Interacts with the dystrophin protein DMD in a calmodulin dependent manner and with related protein UTRN; SGCA of the dystrophin glycoprotein complex; F-actin; calmodulin and with the other members of the syntrophin family SNTB1 and SNTB2. Interacts with MYOC; regulates muscle hypertrophy. Interacts with DTNB. In terms of processing, phosphorylated by CaM-kinase II. Phosphorylation may inhibit the interaction with DMD. In terms of tissue distribution, highly expressed in skeletal and cardiac muscle and is also detected in brain.

It localises to the cell membrane. The protein resides in the sarcolemma. Its subcellular location is the cell junction. It is found in the cytoplasm. The protein localises to the cytoskeleton. Functionally, adapter protein that binds to and probably organizes the subcellular localization of a variety of membrane proteins. May link various receptors to the actin cytoskeleton and the extracellular matrix via dystrophin glycoprotein complex. Plays an important role in synapse formation and in the organization of UTRN and acetylcholine receptors at the neuromuscular synapse. Binds to phosphatidylinositol 4,5-bisphosphate. The polypeptide is Alpha-1-syntrophin (SNTA1) (Oryctolagus cuniculus (Rabbit)).